Consider the following 279-residue polypeptide: Cyanocobalamin reductase / alkylcobalamin dealkylase (279 aa).

Substrate contacts are provided by residues Asp-104, 115–118 (ILAQ), 129–131 (YYQ), Cys-149, and Ile-160. The tract at residues 239–279 (PSEHPSTTSELPLSLLTKPQNSRRARSWLSPSVSPPVSPGP) is disordered. A compositionally biased stretch (low complexity) spans 243-257 (PSTTSELPLSLLTKP). Phosphoserine is present on residues Ser-247, Ser-272, and Ser-276.

Belongs to the MMACHC family. Monomer in the absence of bound substrate. Homodimer; dimerization is triggered by binding to FMN or adenosylcobalamin. Interacts with LMBRD1 and ABCD4; the interaction ensures the transport of cobalamin from the lysosome to the cytoplasm. Forms a multiprotein complex with MMADHC, MTR and MTRR; the interaction with MTR could modulate MMACHC-dependent processing of cobalamin. Heterodimer with MMADHC; the interaction might play a role in the regulation of the balance between AdoCbl and MeCbl synthesis. The cofactor is FAD. FMN serves as cofactor. Detected in liver and kidney (at protein level). Detected in embryos.

The protein resides in the cytoplasm. Its subcellular location is the cytosol. The catalysed reaction is 2 cob(II)alamin-[cyanocobalamin reductase] + 2 hydrogen cyanide + NADP(+) = 2 cyanocob(III)alamin + 2 apo-[cyanocobalamin reductase] + NADPH + H(+). The enzyme catalyses apo-[alkylcobalamin reductase] + an R-cob(III)alamin + glutathione = cob(I)alamin-[alkylcobalamin reductase] + an S-substituted glutathione + H(+). It carries out the reaction apo-[alkylcobalamin reductase] + methylcob(III)alamin + glutathione = S-methyl glutathione + cob(I)alamin-[alkylcobalamin reductase] + H(+). It catalyses the reaction apo-[alkylcobalamin reductase] + adenosylcob(III)alamin + glutathione = S-adenosylglutathione + cob(I)alamin-[alkylcobalamin reductase] + H(+). In terms of biological role, cobalamin (vitamin B12) cytosolic chaperone that catalyzes the reductive decyanation of cyanocob(III)alamin (cyanocobalamin, CNCbl) to yield cob(II)alamin and cyanide, using FAD or FMN as cofactors and NADPH as cosubstrate. Cyanocobalamin constitutes the inactive form of vitamin B12 introduced from the diet, and is converted into the active cofactors methylcobalamin (MeCbl) involved in methionine biosynthesis, and 5'-deoxyadenosylcobalamin (AdoCbl) involved in the TCA cycle. Forms a complex with the lysosomal transporter ABCD4 and its chaperone LMBRD1, to transport cobalamin across the lysosomal membrane into the cytosol. The processing of cobalamin in the cytosol occurs in a multiprotein complex composed of at least MMACHC, MMADHC, MTRR (methionine synthase reductase) and MTR (methionine synthase) which may contribute to shuttle safely and efficiently cobalamin towards MTR in order to produce methionine. Also acts as a glutathione transferase by catalyzing the dealkylation of the alkylcob(III)alamins MeCbl and AdoCbl, using the thiolate of glutathione for nucleophilic displacement to generate cob(I)alamin and the corresponding glutathione thioether. The conversion of incoming MeCbl or AdoCbl into a common intermediate cob(I)alamin is necessary to meet the cellular needs for both cofactors. Cysteine and homocysteine cannot substitute for glutathione in this reaction. This is Cyanocobalamin reductase / alkylcobalamin dealkylase from Mus musculus (Mouse).